The following is a 248-amino-acid chain: Tabinhibitin 10 (248 aa).

The signal sequence occupies residues M1–A22. In terms of domain architecture, SCP spans L66–L208. A Cell attachment site motif is present at residues R221–D223.

Belongs to the CRISP family. Expressed in salivary glands.

It localises to the secreted. Its function is as follows. Inhibits platelet aggregation induced by all agonists tested (ADP, arachidonic acid, the thromboxane A2 analog U46619, thrombin, and snake venom snaclecs (TMVA that activates platelet through GPIB, and stejnulxin that specifically acts through GPVI (GP6))). May act by competing with fibrinogen for binding to glycoprotein IIb/IIIa (ITGA2B/ITGB3). The sequence is that of Tabinhibitin 10 from Tabanus yao (Horsefly).